The primary structure comprises 158 residues: MFRIGQGFDVHEFAEGRPLIIGGITIPHEKGLIGHSDADVLLHTIADACLGAIAAGDIGKHFPDTDPAFKDADSAVLLQKVWEFVREQGYELGNLDCTIIAQKPKMAPHIESMRKRISELLETSIDNINVKATTTEKLGFTGREEGIASQAVVLLQKK.

A divalent metal cation contacts are provided by aspartate 9 and histidine 11. 4-CDP-2-C-methyl-D-erythritol 2-phosphate-binding positions include 9 to 11 (DVH) and 35 to 36 (HS). Histidine 43 provides a ligand contact to a divalent metal cation. 4-CDP-2-C-methyl-D-erythritol 2-phosphate contacts are provided by residues 57–59 (DIG), 62–66 (FPDTD), 101–107 (AQKPKMA), 133–136 (TTTE), phenylalanine 140, and arginine 143.

The protein belongs to the IspF family. Homotrimer. The cofactor is a divalent metal cation.

The catalysed reaction is 4-CDP-2-C-methyl-D-erythritol 2-phosphate = 2-C-methyl-D-erythritol 2,4-cyclic diphosphate + CMP. The protein operates within isoprenoid biosynthesis; isopentenyl diphosphate biosynthesis via DXP pathway; isopentenyl diphosphate from 1-deoxy-D-xylulose 5-phosphate: step 4/6. In terms of biological role, involved in the biosynthesis of isopentenyl diphosphate (IPP) and dimethylallyl diphosphate (DMAPP), two major building blocks of isoprenoid compounds. Catalyzes the conversion of 4-diphosphocytidyl-2-C-methyl-D-erythritol 2-phosphate (CDP-ME2P) to 2-C-methyl-D-erythritol 2,4-cyclodiphosphate (ME-CPP) with a corresponding release of cytidine 5-monophosphate (CMP). The sequence is that of 2-C-methyl-D-erythritol 2,4-cyclodiphosphate synthase from Bacillus thuringiensis subsp. konkukian (strain 97-27).